A 778-amino-acid chain; its full sequence is Endonuclease MutS2 (778 aa).

328–335 (GPNTGGKT) contacts ATP. Residues 703 to 778 (LDLRGKRYEE…GSGCTIANLG (76 aa)) enclose the Smr domain.

The protein belongs to the DNA mismatch repair MutS family. MutS2 subfamily. Homodimer. Binds to stalled ribosomes, contacting rRNA.

Endonuclease that is involved in the suppression of homologous recombination and thus may have a key role in the control of bacterial genetic diversity. Functionally, acts as a ribosome collision sensor, splitting the ribosome into its 2 subunits. Detects stalled/collided 70S ribosomes which it binds and splits by an ATP-hydrolysis driven conformational change. Acts upstream of the ribosome quality control system (RQC), a ribosome-associated complex that mediates the extraction of incompletely synthesized nascent chains from stalled ribosomes and their subsequent degradation. Probably generates substrates for RQC. The chain is Endonuclease MutS2 from Streptococcus equi subsp. zooepidemicus (strain H70).